A 356-amino-acid polypeptide reads, in one-letter code: NADH-quinone oxidoreductase subunit H (356 aa).

Transmembrane regions (helical) follow at residues 18–38, 87–107, 120–140, 166–186, 202–222, 265–285, 292–312, and 328–348; these read IVMVAQSVLLLVVLLIAIAYI, GVFLLAPLVTCVLALAAWAVI, VGILYIFAISSLSIYGIIMAG, IGFVFITVLLCAGSLNLSAIV, WLTFLNWYWLPLLPMFVVFYV, AITTMCAMGAILFMGGWLPPI, WVPGVIWFSLKLFFMFFLFAM, and LGWKVFLPLSLAMVVIVAGVL.

This sequence belongs to the complex I subunit 1 family. As to quaternary structure, NDH-1 is composed of 14 different subunits. Subunits NuoA, H, J, K, L, M, N constitute the membrane sector of the complex.

Its subcellular location is the cell inner membrane. The enzyme catalyses a quinone + NADH + 5 H(+)(in) = a quinol + NAD(+) + 4 H(+)(out). In terms of biological role, NDH-1 shuttles electrons from NADH, via FMN and iron-sulfur (Fe-S) centers, to quinones in the respiratory chain. The immediate electron acceptor for the enzyme in this species is believed to be ubiquinone. Couples the redox reaction to proton translocation (for every two electrons transferred, four hydrogen ions are translocated across the cytoplasmic membrane), and thus conserves the redox energy in a proton gradient. This subunit may bind ubiquinone. The sequence is that of NADH-quinone oxidoreductase subunit H from Nitrobacter hamburgensis (strain DSM 10229 / NCIMB 13809 / X14).